Consider the following 324-residue polypeptide: Acetyl-coenzyme A carboxylase carboxyl transferase subunit alpha (324 aa).

The CoA carboxyltransferase C-terminal domain maps to 44 to 298; it reads RFQDKLTKLQ…RKELIKQLNI (255 aa).

Belongs to the AccA family. Acetyl-CoA carboxylase is a heterohexamer composed of biotin carboxyl carrier protein (accB), biotin carboxylase (accC) and two subunits each of ACCase subunit alpha (accA) and ACCase subunit beta (accD).

Its subcellular location is the plastid. The protein resides in the chloroplast. The catalysed reaction is N(6)-carboxybiotinyl-L-lysyl-[protein] + acetyl-CoA = N(6)-biotinyl-L-lysyl-[protein] + malonyl-CoA. The protein operates within lipid metabolism; malonyl-CoA biosynthesis; malonyl-CoA from acetyl-CoA: step 1/1. Component of the acetyl coenzyme A carboxylase (ACC) complex. First, biotin carboxylase catalyzes the carboxylation of biotin on its carrier protein (BCCP) and then the CO(2) group is transferred by the carboxyltransferase to acetyl-CoA to form malonyl-CoA. The polypeptide is Acetyl-coenzyme A carboxylase carboxyl transferase subunit alpha (Porphyra purpurea (Red seaweed)).